Consider the following 681-residue polypeptide: U3 small nucleolar ribonucleoprotein protein MPP10 (681 aa).

Phosphoserine occurs at positions 61, 120, and 140. Residues 109–139 (ECEDEECEEDASEVEADNQENLETDLDEEQL) are a coiled coil. Positions 111-144 (EDEECEEDASEVEADNQENLETDLDEEQLSDEGG) are enriched in acidic residues. Disordered regions lie at residues 111–202 (EDEE…SVVD), 215–256 (LEKV…GRQK), and 268–365 (YKDF…EKRQ). The segment covering 145–163 (DVPKGRDRAKSSRKSDPRK) has biased composition (basic and acidic residues). 3 positions are modified to phosphoserine: Ser164, Ser168, and Ser172. Positions 215–227 (LEKVEKEEEKRPD) are enriched in basic and acidic residues. Acidic residues-rich tracts occupy residues 228–248 (GEEE…DESE) and 273–322 (DPVE…EDEN). Ser244, Ser247, Ser277, and Ser346 each carry phosphoserine. Residues 349-383 (AVKQESDEVKSSFEKRQEKMNEKIASLEKELLDKK) are a coiled coil. A Glycyl lysine isopeptide (Lys-Gly) (interchain with G-Cter in SUMO2) cross-link involves residue Lys351. The span at 352–365 (QESDEVKSSFEKRQ) shows a compositional bias: basic and acidic residues. Residues Lys383 and Lys395 each participate in a glycyl lysine isopeptide (Lys-Gly) (interchain with G-Cter in SUMO2) cross-link. Residues 471 to 491 (AEIYEQEYLKLNQQKTEEEDN) adopt a coiled-coil conformation. Lys556 is covalently cross-linked (Glycyl lysine isopeptide (Lys-Gly) (interchain with G-Cter in SUMO2)). The segment covering 560 to 576 (KAGDLKTAAEKTATDKK) has biased composition (basic and acidic residues). The segment at 560–644 (KAGDLKTAAE…RKDKPLKSSQ (85 aa)) is disordered. Residues 575-604 (KKRERRKKKYQKRLKIKEKEKRKKLLEKNN) adopt a coiled-coil conformation. Residues 577–599 (RERRKKKYQKRLKIKEKEKRKKL) are compositionally biased toward basic residues. Residue Lys609 is modified to N6-acetyllysine. The span at 630–640 (LLKDERKDKPL) shows a compositional bias: basic and acidic residues. Glycyl lysine isopeptide (Lys-Gly) (interchain with G-Cter in SUMO2) cross-links involve residues Lys632 and Lys649. Positions 657 to 681 (QINDAKQPEKIKKKKQDISVHKLKL) are disordered. Residues 662–681 (KQPEKIKKKKQDISVHKLKL) are compositionally biased toward basic and acidic residues.

This sequence belongs to the MPP10 family. In terms of assembly, part of the small subunit (SSU) processome, composed of more than 70 proteins and the RNA chaperone small nucleolar RNA (snoRNA) U3. Component of a heterotrimeric complex containing IMP3, IMP4 and MPHOSPH10. Interacts with IMP3 and IMP4. In terms of processing, phosphorylated in M (mitotic) phase.

It localises to the nucleus. It is found in the nucleolus. Its subcellular location is the chromosome. In terms of biological role, component of the 60-80S U3 small nucleolar ribonucleoprotein (U3 snoRNP). Required for the early cleavages during pre-18S ribosomal RNA processing. Part of the small subunit (SSU) processome, first precursor of the small eukaryotic ribosomal subunit. During the assembly of the SSU processome in the nucleolus, many ribosome biogenesis factors, an RNA chaperone and ribosomal proteins associate with the nascent pre-rRNA and work in concert to generate RNA folding, modifications, rearrangements and cleavage as well as targeted degradation of pre-ribosomal RNA by the RNA exosome. This is U3 small nucleolar ribonucleoprotein protein MPP10 (Mphosph10) from Mus musculus (Mouse).